The chain runs to 903 residues: Calcium-activated chloride channel regulator 1 (903 aa).

An N-terminal signal peptide occupies residues 1 to 21 (MVPRLTVILFLTLHLLPGMKS). Positions 45-199 (DEKLIQNIKE…HITGTNVIVK (155 aa)) are metalloprotease domain. Zn(2+) is bound at residue His155. Residue Glu156 is part of the active site. Residues His159 and Asp166 each coordinate Zn(2+). Residues 308-476 (VVCLVLDKSG…NGLTNAFSRI (169 aa)) form the VWFA domain. Asn360, Asn372, Asn504, and Asn842 each carry an N-linked (GlcNAc...) asparagine glycan. Residues 883 to 903 (GTKISAINLAIFALAMILSIV) traverse the membrane as a helical segment.

It belongs to the CLCR family. Post-translationally, glycosylated. The 125-kDa product is autoproteolytically processed by the metalloprotease domain and yields to two cell-surface-associated subunits, a 90-kDa protein and a group of 37- to 41-kDa proteins. The cleavage is necessary for calcium-activated chloride channel (CaCC) activation activity. In terms of tissue distribution, trachea.

Its subcellular location is the apical cell membrane. Functionally, may be involved in mediating calcium-activated chloride conductance. May play critical roles in goblet cell metaplasia, mucus hypersecretion, cystic fibrosis and AHR. May be involved in the regulation of mucus production and/or secretion by goblet cells. Involved in the regulation of tissue inflammation in the innate immune response. May play a role as a tumor suppressor. Induces MUC5AC. This Bos taurus (Bovine) protein is Calcium-activated chloride channel regulator 1.